The primary structure comprises 194 residues: Mu-like prophage FluMu protein gp37 (194 aa).

It to phage Mu protein gp37.

In Haemophilus influenzae (strain ATCC 51907 / DSM 11121 / KW20 / Rd), this protein is Mu-like prophage FluMu protein gp37.